Here is a 180-residue protein sequence, read N- to C-terminus: ATP synthase subunit delta (180 aa).

The protein belongs to the ATPase delta chain family. As to quaternary structure, F-type ATPases have 2 components, F(1) - the catalytic core - and F(0) - the membrane proton channel. F(1) has five subunits: alpha(3), beta(3), gamma(1), delta(1), epsilon(1). F(0) has three main subunits: a(1), b(2) and c(10-14). The alpha and beta chains form an alternating ring which encloses part of the gamma chain. F(1) is attached to F(0) by a central stalk formed by the gamma and epsilon chains, while a peripheral stalk is formed by the delta and b chains.

It is found in the cell membrane. Its function is as follows. F(1)F(0) ATP synthase produces ATP from ADP in the presence of a proton or sodium gradient. F-type ATPases consist of two structural domains, F(1) containing the extramembraneous catalytic core and F(0) containing the membrane proton channel, linked together by a central stalk and a peripheral stalk. During catalysis, ATP synthesis in the catalytic domain of F(1) is coupled via a rotary mechanism of the central stalk subunits to proton translocation. In terms of biological role, this protein is part of the stalk that links CF(0) to CF(1). It either transmits conformational changes from CF(0) to CF(1) or is implicated in proton conduction. In Bacillus cereus (strain G9842), this protein is ATP synthase subunit delta.